Here is a 443-residue protein sequence, read N- to C-terminus: Mitochondrial distribution and morphology protein 10 (443 aa).

It belongs to the MDM10 family. As to quaternary structure, component of the ER-mitochondria encounter structure (ERMES) or MDM complex, composed of MMM1, MDM10, MDM12 and MDM34. Associates with the mitochondrial outer membrane sorting assembly machinery SAM(core) complex.

It localises to the mitochondrion outer membrane. Component of the ERMES/MDM complex, which serves as a molecular tether to connect the endoplasmic reticulum and mitochondria. Components of this complex are involved in the control of mitochondrial shape and protein biogenesis and may function in phospholipid exchange. MDM10 is involved in the late assembly steps of the general translocase of the mitochondrial outer membrane (TOM complex). Functions in the TOM40-specific route of the assembly of outer membrane beta-barrel proteins, including the association of TOM40 with the receptor TOM22 and small TOM proteins. Can associate with the SAM(core) complex as well as the MDM12-MMM1 complex, both involved in late steps of the major beta-barrel assembly pathway, that is responsible for biogenesis of all outer membrane beta-barrel proteins. May act as a switch that shuttles between both complexes and channels precursor proteins into the TOM40-specific pathway. Plays a role in mitochondrial morphology and in the inheritance of mitochondria. The protein is Mitochondrial distribution and morphology protein 10 of Pyricularia oryzae (strain 70-15 / ATCC MYA-4617 / FGSC 8958) (Rice blast fungus).